Consider the following 514-residue polypeptide: M-phase inducer phosphatase 1 (514 aa).

A Phosphodegron motif is present at residues 73-83 (MGSSESTDSGF). Ser-75 is subject to Phosphoserine; by CHEK1. Residues Ser-78, Ser-81, and Ser-87 each carry the phosphoserine; by NEK11 modification. The residue at position 106 (Ser-106) is a Phosphoserine. Ser-123 carries the post-translational modification Phosphoserine; by CHEK1 and CHEK2. The short motif at 140–142 (KEN) is the KEN box element. Phosphoserine; by CHEK1 is present on Ser-172. Residues 256 to 308 (PCGSSTRAVLKRADRSHEEPPRGTKRRKSVPSPVKAKADVPEPAQLPSQSLSL) are disordered. Residues 266-277 (KRADRSHEEPPR) show a composition bias toward basic and acidic residues. Residues Ser-271 and Ser-284 each carry the phosphoserine; by CHEK1 and CHEK2 modification. Ser-311 bears the Phosphoserine mark. Positions 366–472 (LIKEFVIIDC…FFLKCQSHCE (107 aa)) constitute a Rhodanese domain. The active site involves Cys-421. Position 497 is a phosphothreonine; by CHEK1 (Thr-497). Phosphoserine; by PLK3 occurs at positions 503 and 509.

It belongs to the MPI phosphatase family. As to quaternary structure, interacts with CCNB1/cyclin B1. Interacts with YWHAE/14-3-3 epsilon when phosphorylated. Interacts with CUL1 specifically when CUL1 is neddylated and active. Interacts with BTRC/BTRCP1 and FBXW11/BTRCP2. Interactions with CUL1, BTRC and FBXW11 are enhanced upon DNA damage. Interacts with CHEK2; mediates CDC25A phosphorylation and degradation in response to infrared-induced DNA damages. Interacts with HSP90AB1; prevents heat shock-mediated CDC25A degradation and contributes to cell cycle progression. Phosphorylated by CHEK1 on Ser-75, Ser-123, Ser-172, Ser-271, Ser-284 and Thr-497 during checkpoint mediated cell cycle arrest. Also phosphorylated by CHEK2 on Ser-123, Ser-271, and Ser-284 during checkpoint mediated cell cycle arrest. Phosphorylation on Ser-172 and Thr-497 creates binding sites for YWHAE/14-3-3 epsilon which inhibits CDC25A. Phosphorylation on Ser-75, Ser-123, Ser-172, Ser-271 and Ser-284 may also promote ubiquitin-dependent proteolysis of CDC25A by the SCF complex. Phosphorylation of CDC25A at Ser-75 by CHEK1 primes it for subsequent phosphorylation at Ser-75, Ser-81 and Ser-87 by NEK11. Phosphorylation by NEK11 is required for BTRC-mediated polyubiquitination and degradation. Phosphorylation by PIM1 leads to an increase in phosphatase activity. Phosphorylated by PLK3 following DNA damage, leading to promote its ubiquitination and degradation. Post-translationally, ubiquitinated by the anaphase promoting complex/cyclosome (APC/C) ubiquitin ligase complex that contains FZR1/CDH1 during G1 phase leading to its degradation by the proteasome. Ubiquitinated by a SCF complex containing BTRC and FBXW11 during S phase leading to its degradation by the proteasome. Deubiquitination by USP17L2/DUB3 leads to its stabilization. As to expression, ubiquitously expressed in most developing tissue. High levels in the testis and lower levels in the ovary, particularly in germ cells. Lower levels also in kidney, liver, heart and muscle.

It carries out the reaction O-phospho-L-tyrosyl-[protein] + H2O = L-tyrosyl-[protein] + phosphate. Stimulated by B-type cyclins. Stimulated by PIM1-mediated phosphorylation. Its function is as follows. Tyrosine protein phosphatase which functions as a dosage-dependent inducer of mitotic progression. Directly dephosphorylates CDK1 and stimulates its kinase activity. Also dephosphorylates CDK2 in complex with cyclin-E, in vitro. This is M-phase inducer phosphatase 1 (Cdc25a) from Mus musculus (Mouse).